We begin with the raw amino-acid sequence, 298 residues long: Protoheme IX farnesyltransferase (298 aa).

8 helical membrane-spanning segments follow: residues 24–44 (VVSLIVFTAVIGMFLAVPAWP), 46–66 (WTTIWAGTLGIGLVASAAAAF), 97–117 (LVFAGVLGGSGLLLLHTVVNP), 118–138 (LTMWLTLATFVGYAVIYTVLL), 146–166 (IVIGGASGAMPPVLGWAAATG), 172–192 (ALLLFLIIFAWTPPHFWALAL), 231–251 (LLPVGTGMAGALYLVGAVLLG), and 278–298 (IWYLAALFAIMLLDHYFPIPV).

This sequence belongs to the UbiA prenyltransferase family. Protoheme IX farnesyltransferase subfamily.

The protein localises to the cell inner membrane. It carries out the reaction heme b + (2E,6E)-farnesyl diphosphate + H2O = Fe(II)-heme o + diphosphate. The protein operates within porphyrin-containing compound metabolism; heme O biosynthesis; heme O from protoheme: step 1/1. Its function is as follows. Converts heme B (protoheme IX) to heme O by substitution of the vinyl group on carbon 2 of heme B porphyrin ring with a hydroxyethyl farnesyl side group. In Thiobacillus denitrificans (strain ATCC 25259 / T1), this protein is Protoheme IX farnesyltransferase.